The primary structure comprises 387 residues: Phosphoglycerate kinase (387 aa).

Substrate-binding positions include 21 to 23, Arg-36, 59 to 62, Arg-113, and Arg-146; these read DLN and HLGR. ATP contacts are provided by residues Lys-197, Glu-314, and 340-343; that span reads GGDT.

This sequence belongs to the phosphoglycerate kinase family. As to quaternary structure, monomer.

The protein resides in the cytoplasm. It catalyses the reaction (2R)-3-phosphoglycerate + ATP = (2R)-3-phospho-glyceroyl phosphate + ADP. It functions in the pathway carbohydrate degradation; glycolysis; pyruvate from D-glyceraldehyde 3-phosphate: step 2/5. In Sodalis glossinidius (strain morsitans), this protein is Phosphoglycerate kinase.